The following is a 98-amino-acid chain: Large ribosomal subunit protein uL23 (98 aa).

It belongs to the universal ribosomal protein uL23 family. As to quaternary structure, part of the 50S ribosomal subunit. Contacts protein L29, and trigger factor when it is bound to the ribosome.

In terms of biological role, one of the early assembly proteins it binds 23S rRNA. One of the proteins that surrounds the polypeptide exit tunnel on the outside of the ribosome. Forms the main docking site for trigger factor binding to the ribosome. The protein is Large ribosomal subunit protein uL23 of Clostridium botulinum (strain Eklund 17B / Type B).